We begin with the raw amino-acid sequence, 100 residues long: Aspartyl/glutamyl-tRNA(Asn/Gln) amidotransferase subunit C (100 aa).

This sequence belongs to the GatC family. Heterotrimer of A, B and C subunits.

It carries out the reaction L-glutamyl-tRNA(Gln) + L-glutamine + ATP + H2O = L-glutaminyl-tRNA(Gln) + L-glutamate + ADP + phosphate + H(+). The enzyme catalyses L-aspartyl-tRNA(Asn) + L-glutamine + ATP + H2O = L-asparaginyl-tRNA(Asn) + L-glutamate + ADP + phosphate + 2 H(+). Allows the formation of correctly charged Asn-tRNA(Asn) or Gln-tRNA(Gln) through the transamidation of misacylated Asp-tRNA(Asn) or Glu-tRNA(Gln) in organisms which lack either or both of asparaginyl-tRNA or glutaminyl-tRNA synthetases. The reaction takes place in the presence of glutamine and ATP through an activated phospho-Asp-tRNA(Asn) or phospho-Glu-tRNA(Gln). This Streptococcus pneumoniae (strain Taiwan19F-14) protein is Aspartyl/glutamyl-tRNA(Asn/Gln) amidotransferase subunit C.